The sequence spans 79 residues: Acyl carrier protein (79 aa).

Residues 1 to 76 form the Carrier domain; the sequence is MEVFEEVRDV…DVVTYIENLN (76 aa). Serine 36 is modified (O-(pantetheine 4'-phosphoryl)serine).

The protein belongs to the acyl carrier protein (ACP) family. Post-translationally, 4'-phosphopantetheine is transferred from CoA to a specific serine of apo-ACP by AcpS. This modification is essential for activity because fatty acids are bound in thioester linkage to the sulfhydryl of the prosthetic group.

The protein resides in the cytoplasm. The protein operates within lipid metabolism; fatty acid biosynthesis. Functionally, carrier of the growing fatty acid chain in fatty acid biosynthesis. The protein is Acyl carrier protein of Campylobacter hominis (strain ATCC BAA-381 / DSM 21671 / CCUG 45161 / LMG 19568 / NCTC 13146 / CH001A).